The primary structure comprises 105 residues: Heat shock protein HspQ (105 aa).

Belongs to the HspQ family.

It is found in the cytoplasm. In terms of biological role, involved in the degradation of certain denaturated proteins, including DnaA, during heat shock stress. The polypeptide is Heat shock protein HspQ (Blochmanniella floridana).